Reading from the N-terminus, the 173-residue chain is Translation initiation factor IF-3 (173 aa).

The protein belongs to the IF-3 family. Monomer.

It localises to the cytoplasm. In terms of biological role, IF-3 binds to the 30S ribosomal subunit and shifts the equilibrium between 70S ribosomes and their 50S and 30S subunits in favor of the free subunits, thus enhancing the availability of 30S subunits on which protein synthesis initiation begins. This chain is Translation initiation factor IF-3, found in Caulobacter vibrioides (strain ATCC 19089 / CIP 103742 / CB 15) (Caulobacter crescentus).